The chain runs to 369 residues: Anthranilate phosphoribosyltransferase (369 aa).

5-phospho-alpha-D-ribose 1-diphosphate contacts are provided by residues Gly85, 88-89 (GD), Thr93, 95-98 (NLST), 113-121 (KHGNRAASS), and Ser125. Residue Gly85 participates in anthranilate binding. Ser97 contributes to the Mg(2+) binding site. Asn116 serves as a coordination point for anthranilate. Anthranilate is bound at residue Arg171. Mg(2+) is bound by residues Asp229 and Glu230.

It belongs to the anthranilate phosphoribosyltransferase family. In terms of assembly, homodimer. Requires Mg(2+) as cofactor.

The enzyme catalyses N-(5-phospho-beta-D-ribosyl)anthranilate + diphosphate = 5-phospho-alpha-D-ribose 1-diphosphate + anthranilate. Its pathway is amino-acid biosynthesis; L-tryptophan biosynthesis; L-tryptophan from chorismate: step 2/5. In terms of biological role, catalyzes the transfer of the phosphoribosyl group of 5-phosphorylribose-1-pyrophosphate (PRPP) to anthranilate to yield N-(5'-phosphoribosyl)-anthranilate (PRA). The polypeptide is Anthranilate phosphoribosyltransferase (Frankia alni (strain DSM 45986 / CECT 9034 / ACN14a)).